A 189-amino-acid chain; its full sequence is Accessory gene regulator protein B (189 aa).

The next 5 membrane-spanning stretches (helical) occupy residues 49 to 69 (IAYILNIFLFTLITNLTFYLI), 81 to 100 (SFWCYVESIILFILLPLVIV), 110 to 130 (IILTVISLGVISVYAPAATKK), 143 to 163 (YYAIIVSLTLFIITLIIKEPF), and 164 to 184 (AQFIQLGIIIEAITLLPIFFI).

Belongs to the AgrB family.

It localises to the cell membrane. Its function is as follows. Essential for the production of a quorum sensing system signal molecule, the autoinducing peptide (AIP). This quorum sensing system is responsible for the regulation of the expression of virulence factor genes. Involved in the proteolytic processing of AgrD, the precursor of AIP. The polypeptide is Accessory gene regulator protein B (Staphylococcus aureus (strain COL)).